We begin with the raw amino-acid sequence, 228 residues long: Geranylgeranylglyceryl phosphate synthase (228 aa).

Residue K11 coordinates sn-glycerol 1-phosphate. The Mg(2+) site is built by D13 and T39. Sn-glycerol 1-phosphate-binding positions include 159–164 (YIEYSG), G189, and 209–210 (GN).

Belongs to the GGGP/HepGP synthase family. Group I subfamily. It depends on Mg(2+) as a cofactor.

It localises to the cytoplasm. It carries out the reaction sn-glycerol 1-phosphate + (2E,6E,10E)-geranylgeranyl diphosphate = sn-3-O-(geranylgeranyl)glycerol 1-phosphate + diphosphate. It participates in membrane lipid metabolism; glycerophospholipid metabolism. In terms of biological role, prenyltransferase that catalyzes the transfer of the geranylgeranyl moiety of geranylgeranyl diphosphate (GGPP) to the C3 hydroxyl of sn-glycerol-1-phosphate (G1P). This reaction is the first ether-bond-formation step in the biosynthesis of archaeal membrane lipids. This is Geranylgeranylglyceryl phosphate synthase from Methanoregula boonei (strain DSM 21154 / JCM 14090 / 6A8).